The primary structure comprises 290 residues: MAKHLALSVAAAVAVSWLAASSAAAAGFYEKFDVVGAGDHVRVVSDDGKTQQVALTLDRSSGSGFTSKDTYLFGEFSVQMKLVGGNSAGTVTSFYLSSGEGDGHDEIDIEFMGNLSGNPYVMNTNVWANGDGKKEHQFYLWFDPTADFHTYKIIWNPQNIIFQVDDVPVRTFKKYDDLAYPQSKPMRLHATLWDGSYWATRHGDVKIDWSGAPFVVSYRGYSTNACVNNNPAGGWSSSWCPEGTSAWIHRELDGAELGTVAWAERNYMSYNYCADGWRFPQGFPAECYRK.

Residues 1–25 (MAKHLALSVAAAVAVSWLAASSAAA) form the signal peptide. In terms of domain architecture, GH16 spans 26-218 (AGFYEKFDVV…WSGAPFVVSY (193 aa)). Glutamate 106 functions as the Nucleophile in the catalytic mechanism. Glutamate 110 (proton donor) is an active-site residue. Glutamate 110 contacts xyloglucan. A glycan (N-linked (GlcNAc...) asparagine) is linked at asparagine 114. Residues 123 to 125 (NTN), 133 to 135 (KKE), and 197 to 198 (YW) contribute to the xyloglucan site. 2 disulfide bridges follow: cysteine 226–cysteine 240 and cysteine 273–cysteine 287. Arginine 278 contacts xyloglucan.

It belongs to the glycosyl hydrolase 16 family. XTH group 2 subfamily. Post-translationally, contains at least one intrachain disulfide bond essential for its enzymatic activity. Transcript strongly detected in leaf sheaths. Weakly or not expressed in leaf blades, roots and calli. Accumulation of transcript detected in shoot apex meristem, vascular tissues, young leaves, vascular bundles of leaf sheaths, and peripheral cylinder of the vascular bundles and fibers in the nodal region.

The protein resides in the secreted. It is found in the cell wall. The protein localises to the extracellular space. Its subcellular location is the apoplast. The catalysed reaction is breaks a beta-(1-&gt;4) bond in the backbone of a xyloglucan and transfers the xyloglucanyl segment on to O-4 of the non-reducing terminal glucose residue of an acceptor, which can be a xyloglucan or an oligosaccharide of xyloglucan.. Catalyzes xyloglucan endohydrolysis (XEH) and/or endotransglycosylation (XET). Cleaves and religates xyloglucan polymers, an essential constituent of the primary cell wall, and thereby participates in cell wall construction of growing tissues. May promote elongation of three internodes (II, III and IV) and may be involved in cell elongation processes. This is Xyloglucan endotransglycosylase/hydrolase protein 8 (XTH8) from Oryza sativa subsp. japonica (Rice).